The following is a 621-amino-acid chain: Kininogen-1 (621 aa).

Positions 1-18 (MKLITILFLCSRLLPSLT) are cleaved as a signal peptide. The 105-residue stretch at 27 to 131 (CNDQDVFKAV…IQTCLITPAE (105 aa)) folds into the Cystatin kininogen-type 1 domain. 9 disulfides stabilise this stretch: Cys27–Cys591, Cys82–Cys93, Cys106–Cys125, Cys141–Cys144, Cys205–Cys217, Cys228–Cys247, Cys263–Cys266, Cys327–Cys339, and Cys350–Cys369. Residues Asn47 and Asn87 are each glycosylated (N-linked (GlcNAc...) asparagine). An O-linked (GalNAc...) threonine; partial glycan is attached at Thr136. The 104-residue stretch at 150 to 253 (TKSPDLEPVL…SQKCDLYPVK (104 aa)) folds into the Cystatin kininogen-type 2 domain. Asn168 and Asn169 each carry an N-linked (GlcNAc...) asparagine glycan. A glycan (N-linked (GlcNAc...) asparagine; partial) is linked at Asn197. Asn204 carries N-linked (GlcNAc...) asparagine glycosylation. The Cystatin kininogen-type 3 domain maps to 272–375 (VDSPDLEEPL…TVNCQPLGQT (104 aa)). Ser331 bears the Phosphoserine mark. The disordered stretch occupies residues 396–497 (EGSTTVSLPH…GKNNGKHYDW (102 aa)). The O-linked (GalNAc...) serine glycan is linked to Ser398. Residues Thr399 and Thr400 are each glycosylated (O-linked (GalNAc...) threonine). Ser406 carries O-linked (GalNAc...) serine glycosylation. A compositionally biased stretch (basic residues) spans 444–492 (GHKHKHDQGHGHHGSHGLGHGHQKQHGLGHGHKHGHGHGKHKNKGKNNG). An O-linked (GalNAc...) serine glycan is attached at Ser512. Residues Thr520, Thr524, Thr536, Thr548, Thr553, and Thr570 are each glycosylated (O-linked (GalNAc...) threonine). Residue Ser581 is glycosylated (O-linked (GalNAc...) serine).

In terms of processing, bradykinin is released from kininogen by plasma kallikrein. Post-translationally, phosphorylated by FAM20C in the extracellular medium. Bradykinin is inactivated by ACE, which removes the dipeptide Arg-Phe from its C-terminus. Plasma.

It is found in the secreted. Its subcellular location is the extracellular space. Functionally, kininogens are inhibitors of thiol proteases. HMW-kininogen plays an important role in blood coagulation by helping to position optimally prekallikrein and factor XI next to factor XII; HMW-kininogen inhibits the thrombin- and plasmin-induced aggregation of thrombocytes. LMW-kininogen inhibits the aggregation of thrombocytes. LMW-kininogen is in contrast to HMW-kininogen not involved in blood clotting. In terms of biological role, the active peptide bradykinin is a potent vasodilatator that is released from HMW-kininogen shows a variety of physiological effects: (A) influence in smooth muscle contraction, (B) induction of hypotension, (C) natriuresis and diuresis, (D) decrease in blood glucose level, (E) it is a mediator of inflammation and causes (E1) increase in vascular permeability, (E2) stimulation of nociceptors (4E3) release of other mediators of inflammation (e.g. prostaglandins), (F) it has a cardioprotective effect (directly via bradykinin action, indirectly via endothelium-derived relaxing factor action). This is Kininogen-1 (KNG1) from Bos taurus (Bovine).